A 595-amino-acid chain; its full sequence is Anthranilate synthase alpha subunit 1, chloroplastic (595 aa).

Residues M1–C54 constitute a chloroplast transit peptide. V55 is subject to N-acetylvaline. Residues S115 and P356 to M358 contribute to the L-tryptophan site. Residue G391–T392 coordinates chorismate. Mg(2+) is bound at residue E418. Residues Y506, R526, G558–G560, and G560 each bind chorismate. Residue E573 participates in Mg(2+) binding.

It belongs to the anthranilate synthase component I family. In terms of assembly, heterotetramer consisting of two non-identical subunits: a beta subunit and a large alpha subunit. Requires Mg(2+) as cofactor. As to expression, expressed in the central cylinder of mature primary root zones, including pericycle and early lateral root primordia, and vasculature of cotyledons.

Its subcellular location is the plastid. It localises to the chloroplast. It catalyses the reaction chorismate + L-glutamine = anthranilate + pyruvate + L-glutamate + H(+). The protein operates within amino-acid biosynthesis; L-tryptophan biosynthesis; L-tryptophan from chorismate: step 1/5. Feedback inhibition by tryptophan. In terms of biological role, part of a heterotetrameric complex that catalyzes the two-step biosynthesis of anthranilate, an intermediate in the biosynthesis of L-tryptophan. In the first step, the glutamine-binding beta subunit of anthranilate synthase (AS) provides the glutamine amidotransferase activity which generates ammonia as a substrate that, along with chorismate, is used in the second step, catalyzed by the large alpha subunit of AS to produce anthranilate. Plays an important regulatory role in auxin production via the tryptophan-dependent biosynthetic pathway. This is Anthranilate synthase alpha subunit 1, chloroplastic (ASA1) from Arabidopsis thaliana (Mouse-ear cress).